The sequence spans 149 residues: Large ribosomal subunit protein bL9 (149 aa).

This sequence belongs to the bacterial ribosomal protein bL9 family.

Binds to the 23S rRNA. This is Large ribosomal subunit protein bL9 from Geobacillus sp. (strain WCH70).